Reading from the N-terminus, the 316-residue chain is Olfactory receptor class A-like protein 1 (316 aa).

At 1–8 (MDLCVTIK) the chain is on the extracellular side. A helical transmembrane segment spans residues 9 to 29 (GVSFLLQAGLGILANALVLLA). Over 30–39 (YAHIRLAEAR) the chain is Cytoplasmic. Residues 40–60 (LQPVDAILCHLALVDLLLLLT) traverse the membrane as a helical segment. The Extracellular segment spans residues 61 to 97 (RGVPQTMTVFGMRNLLDDTGCKVVIYTYRIARALSVC). An intrachain disulfide couples cysteine 81 to cysteine 169. Residues 98-118 (ITCMLSVFQAVTVAPAAGPLL) traverse the membrane as a helical segment. Residues 119–132 (SGVKARLPQLLAPT) are Cytoplasmic-facing. A helical transmembrane segment spans residues 133–153 (FAALWFINMAVCIAAPFFSVA). Topologically, residues 154-187 (PRNGTVPPFTLNLGFCHVDFHDNLSYVLNGVAVS) are extracellular. N-linked (GlcNAc...) asparagine glycans are attached at residues asparagine 156 and asparagine 176. Residues 188–208 (VRDFAFVGAMLASSGFILLLL) traverse the membrane as a helical segment. The Cytoplasmic portion of the chain corresponds to 209-233 (HRHRRQVRAVRRSQGSTMETRAART). The chain crosses the membrane as a helical span at residues 234 to 254 (VLMLVILYSVFFGIDNVIWIY). The Extracellular portion of the chain corresponds to 255 to 264 (MLTVAQVPPV). The helical transmembrane segment at 265 to 285 (VADMRVFFSSCYASLSPFLII) threads the bilayer. At 286–316 (SSNRKLKARMVCATSEQERQAEDGKNSSGKN) the chain is on the cytoplasmic side.

This sequence belongs to the G-protein coupled receptor 1 family. In terms of tissue distribution, highly expressed in the olfactory rosette where it localizes to a subset of olfactory sensory neurons, mainly in the apical region of the neuroepithelium. Not detected in other tissues tested.

The protein localises to the cell membrane. Its function is as follows. Probable pheromone receptor. Shows high specificity for 4-hydroxyphenylacetic acid. Activation of the receptor stimulates intracellular calcium release. This Danio rerio (Zebrafish) protein is Olfactory receptor class A-like protein 1.